We begin with the raw amino-acid sequence, 668 residues long: DNA ligase (668 aa).

NAD(+) contacts are provided by residues 37–41 (DNVYD), 86–87 (SM), and E116. K118 functions as the N6-AMP-lysine intermediate in the catalytic mechanism. Positions 139, 173, 288, and 312 each coordinate NAD(+). C406, C409, C424, and C429 together coordinate Zn(2+). A BRCT domain is found at 591 to 668 (APDNPFKDKT…TEEEAIAQIE (78 aa)).

The protein belongs to the NAD-dependent DNA ligase family. LigA subfamily. Mg(2+) serves as cofactor. It depends on Mn(2+) as a cofactor.

The catalysed reaction is NAD(+) + (deoxyribonucleotide)n-3'-hydroxyl + 5'-phospho-(deoxyribonucleotide)m = (deoxyribonucleotide)n+m + AMP + beta-nicotinamide D-nucleotide.. In terms of biological role, DNA ligase that catalyzes the formation of phosphodiester linkages between 5'-phosphoryl and 3'-hydroxyl groups in double-stranded DNA using NAD as a coenzyme and as the energy source for the reaction. It is essential for DNA replication and repair of damaged DNA. This is DNA ligase from Lactobacillus helveticus (strain DPC 4571).